The chain runs to 343 residues: Methionine synthase (343 aa).

The Zn(2+) site is built by histidine 211, cysteine 213, glutamate 236, and cysteine 315.

The protein belongs to the archaeal MetE family. Zn(2+) serves as cofactor.

The protein operates within amino-acid biosynthesis; L-methionine biosynthesis via de novo pathway. Catalyzes the transfer of a methyl group to L-homocysteine resulting in methionine formation. The physiological methyl donor is unknown. This chain is Methionine synthase, found in Thermoplasma acidophilum (strain ATCC 25905 / DSM 1728 / JCM 9062 / NBRC 15155 / AMRC-C165).